The primary structure comprises 317 residues: Cyclin-T1-3 (317 aa).

Belongs to the cyclin family. Cyclin T subfamily. Interacts with CDKC-1 and CDKC-2. Abundantly expressed in flowers. Expressed in roots, seedlings, rosettes and stems.

The chain is Cyclin-T1-3 (CYCT1-3) from Arabidopsis thaliana (Mouse-ear cress).